An 84-amino-acid chain; its full sequence is Seminal ribonuclease (84 aa).

Intrachain disulfides connect Cys10/Cys65, Cys28/Cys80, and Cys35/Cys42. Residues 11 to 15, Lys36, and Arg55 contribute to the substrate site; that span reads KPVNT.

Belongs to the pancreatic ribonuclease family. Homodimer; disulfide-linked.

The protein localises to the secreted. It catalyses the reaction an [RNA] containing cytidine + H2O = an [RNA]-3'-cytidine-3'-phosphate + a 5'-hydroxy-ribonucleotide-3'-[RNA].. The enzyme catalyses an [RNA] containing uridine + H2O = an [RNA]-3'-uridine-3'-phosphate + a 5'-hydroxy-ribonucleotide-3'-[RNA].. The protein is Seminal ribonuclease (SRN) of Giraffa camelopardalis (Giraffe).